The primary structure comprises 164 residues: Protein DOWNSTREAM OF FLC (164 aa).

A signal peptide spans 1-23 (MAKSFVPLIAVLCVLVLPLAAMA). 3 disulfide bridges follow: cysteine 36/cysteine 107, cysteine 39/cysteine 148, and cysteine 60/cysteine 95.

This sequence belongs to the Ole e I family.

The protein localises to the secreted. Part of a three-gene cluster containing FLC, UFC and DFC, which is coordinately regulated in response to vernalization. Not regulated by FLX. In Arabidopsis thaliana (Mouse-ear cress), this protein is Protein DOWNSTREAM OF FLC (DFC).